We begin with the raw amino-acid sequence, 100 residues long: uncharacterized protein (100 aa).

The region spanning 8–100 (MKQSDDQIRA…TYLPGFLETL (93 aa)) is the HTH arsR-type domain. The H-T-H motif DNA-binding region spans 44–67 (CGEVGEKCNIVKTTASYHFKTLRE).

This is an uncharacterized protein from Bacillus subtilis (strain 168).